The following is a 35-amino-acid chain: Antimicrobial peptide 3 (35 aa).

The region spanning 4–35 (GGECGGRFGGCAGGQCCSRFGFCGSGPKYCAH) is the Chitin-binding type-1 domain. Cystine bridges form between C7/C20, C14/C26, and C19/C33.

Contains 3 disulfide bonds. Expressed in leaf, flower, stem and seed with highest expression in leaf (at protein level).

Functionally, has antifungal activity against A.niger (IC(50)=5.4 uM), B.sorokiniana (IC(50)=2.0 uM), B.cinerea (IC(50)=1.6 uM), F.solani (IC(50)=3.7 uM) and A.alternata (IC(50)=5.0 uM). Binds chitin in vitro. Has no antibacterial activity at concentrations up to 10 uM. This is Antimicrobial peptide 3 from Stellaria media (Common chickweed).